The primary structure comprises 306 residues: Protein-methionine-sulfoxide reductase catalytic subunit MsrP (306 aa).

Positions 1-45 (MLIRHAPDLTDNDVTDHSLYLKRRTLMAGVAGLGVAGASASHAQA) form a signal peptide, tat-type signal. Mo-molybdopterin is bound by residues Asn69, 72 to 73 (YE), Cys127, Thr162, Asn210, Arg215, and 226 to 228 (GIK).

The protein belongs to the MsrP family. As to quaternary structure, heterodimer of a catalytic subunit (MsrP) and a heme-binding subunit (MsrQ). It depends on Mo-molybdopterin as a cofactor. Post-translationally, predicted to be exported by the Tat system. The position of the signal peptide cleavage has not been experimentally proven.

It localises to the periplasm. It carries out the reaction L-methionyl-[protein] + a quinone + H2O = L-methionyl-(S)-S-oxide-[protein] + a quinol. The catalysed reaction is L-methionyl-[protein] + a quinone + H2O = L-methionyl-(R)-S-oxide-[protein] + a quinol. Its function is as follows. Part of the MsrPQ system that repairs oxidized periplasmic proteins containing methionine sulfoxide residues (Met-O), using respiratory chain electrons. Thus protects these proteins from oxidative-stress damage caused by reactive species of oxygen and chlorine generated by the host defense mechanisms. MsrPQ is essential for the maintenance of envelope integrity under bleach stress, rescuing a wide series of structurally unrelated periplasmic proteins from methionine oxidation. The catalytic subunit MsrP is non-stereospecific, being able to reduce both (R-) and (S-) diastereoisomers of methionine sulfoxide. The polypeptide is Protein-methionine-sulfoxide reductase catalytic subunit MsrP (Caulobacter vibrioides (strain ATCC 19089 / CIP 103742 / CB 15) (Caulobacter crescentus)).